The sequence spans 252 residues: Phosphoglycolate phosphatase (252 aa).

The active-site Nucleophile is the Asp13. Positions 13, 15, and 192 each coordinate Mg(2+).

It belongs to the HAD-like hydrolase superfamily. CbbY/CbbZ/Gph/YieH family. In terms of assembly, monomer. It depends on Mg(2+) as a cofactor. Chloride serves as cofactor.

It carries out the reaction 2-phosphoglycolate + H2O = glycolate + phosphate. It participates in organic acid metabolism; glycolate biosynthesis; glycolate from 2-phosphoglycolate: step 1/1. Its function is as follows. Specifically catalyzes the dephosphorylation of 2-phosphoglycolate. Is involved in the dissimilation of the intracellular 2-phosphoglycolate formed during the DNA repair of 3'-phosphoglycolate ends, a major class of DNA lesions induced by oxidative stress. This Shigella flexneri protein is Phosphoglycolate phosphatase.